Reading from the N-terminus, the 1176-residue chain is Growth-differentiation transition protein 5 (1176 aa).

The N-terminal stretch at 1–25 (MKNNFFKKTIILLIFLSIFILYSNA) is a signal peptide. The Extracellular portion of the chain corresponds to 26–913 (DEETITTPPG…DVPANENTLN (888 aa)). Residues 914–934 (LLTIVLPICSAVVVASSVMLG) form a helical membrane-spanning segment. Residues 935–1176 (RLFYKKKFKK…NVGYNVHEYF (242 aa)) are Cytoplasmic-facing. 2 stretches are compositionally biased toward low complexity: residues 965–974 (SNIENKSESI) and 1053–1066 (PQISPDSPQHSIPS). Disordered stretches follow at residues 965–985 (SNIENKSESIATPQQRNEQKE) and 1050–1080 (VDTPQISPDSPQHSIPSSSPPPPPLPLPPST). A compositionally biased stretch (pro residues) spans 1067-1078 (SSPPPPPLPLPP).

The protein belongs to the GDT family.

It is found in the membrane. The chain is Growth-differentiation transition protein 5 (gdt5) from Dictyostelium discoideum (Social amoeba).